We begin with the raw amino-acid sequence, 156 residues long: Persephin (156 aa).

The N-terminal stretch at 1-21 is a signal peptide; that stretch reads MAVGKFLLGSLLLLSLQLGQG. 3 disulfide bridges follow: cysteine 66–cysteine 124, cysteine 93–cysteine 152, and cysteine 97–cysteine 154.

The protein belongs to the TGF-beta family. GDNF subfamily. In terms of assembly, homodimer; disulfide-linked. Interacts with GFRA4 coreceptor and RET: forms a 2:2:2 ternary complex composed of PSPN ligand, GFRA4 and RET receptor.

The protein localises to the secreted. Its function is as follows. Growth factor that exhibits neurotrophic activity on mesencephalic dopaminergic and motor neurons. Acts by binding to its coreceptor, GFRA4, leading to autophosphorylation and activation of the RET receptor. The protein is Persephin of Homo sapiens (Human).